A 520-amino-acid chain; its full sequence is MSRQLTLYPGAERLGFSGCSAVISGRLSGSHASVRAGVKGAAFGSRSLFCVGGGRRLALSSAGRSGGFTLGHGGASGGRPGGFVGTVFGSAGLGPTCPSVCPPGGIPQVVVNKSLLAPLNVELDPEIQKVRAQEREQIKALNNKFASFIDKVRFLEQQNQVLETKWELLQQLDLNNSKRSLEPVHESYISNLQKQLEILSGDRVRLDSELRNMREVVEDCKKRYEVEINRRTAAENEFVVLKKDVDAAYMNKVELQAKVDSLTDDIKFFKVLFEGEIAQMQSHISDTSVILSMDNNRQLDLDSILAEVRAQYEEIAVKSKAETENMYQCKIQELQATAGQHGDDLKHTKSEITEINRLIQRIHSEIGNMKKQCSNLETAIADAEQRGDCALKDARAKLDQLEGALQQAKEELARMLREHQELMNVKLALDMEIATYRKLLESEESRMAGEYPNSVSISVISSTNAGPGGAGFSVGFGASSSYNYRPLALEVKTKGSCGSELKDPPAKTSGSSGTTKKTSR.

The head stretch occupies residues 1-133 (MSRQLTLYPG…DPEIQKVRAQ (133 aa)). Residues 134 to 169 (EREQIKALNNKFASFIDKVRFLEQQNQVLETKWELL) are coil 1A. The region spanning 134–447 (EREQIKALNN…KLLESEESRM (314 aa)) is the IF rod domain. Residues 170-188 (QQLDLNNSKRSLEPVHESY) form a linker 1 region. The coil 1B stretch occupies residues 189-280 (ISNLQKQLEI…VLFEGEIAQM (92 aa)). The interval 281–304 (QSHISDTSVILSMDNNRQLDLDSI) is linker 12. A coil 2 region spans residues 305-443 (LAEVRAQYEE…ATYRKLLESE (139 aa)). The tract at residues 444 to 520 (ESRMAGEYPN…SSGTTKKTSR (77 aa)) is tail. The tract at residues 494 to 520 (KGSCGSELKDPPAKTSGSSGTTKKTSR) is disordered. Positions 507 to 520 (KTSGSSGTTKKTSR) are enriched in low complexity.

This sequence belongs to the intermediate filament family. As to quaternary structure, heterotetramer of two type I and two type II keratins.

Has a role in hair formation. Specific component of keratin intermediate filaments in the inner root sheath (IRS) of the hair follicle. This Mus musculus (Mouse) protein is Keratin, type II cytoskeletal 72 (Krt72).